The sequence spans 210 residues: Dephospho-CoA kinase (210 aa).

The DPCK domain occupies 4–202; sequence WVGLTGGIGS…AFYSGIFASK (199 aa). 12-17 is an ATP binding site; sequence GSGKSA.

It belongs to the CoaE family.

It localises to the cytoplasm. The enzyme catalyses 3'-dephospho-CoA + ATP = ADP + CoA + H(+). It functions in the pathway cofactor biosynthesis; coenzyme A biosynthesis; CoA from (R)-pantothenate: step 5/5. In terms of biological role, catalyzes the phosphorylation of the 3'-hydroxyl group of dephosphocoenzyme A to form coenzyme A. The chain is Dephospho-CoA kinase from Neisseria meningitidis serogroup A / serotype 4A (strain DSM 15465 / Z2491).